The chain runs to 1012 residues: Structural polyprotein (1012 aa).

A divalent metal cation is bound at residue Asp-30. The region spanning Ala-514 to Ala-755 is the Peptidase S50 domain. Residue Ser-653 is the Nucleophile of the active site. Lys-692 is a catalytic residue. Residues Met-972–Glu-1012 form a disordered region. Basic residues predominate over residues Arg-975–Pro-986. An interaction with VP1 protein region spans residues Ile-1003 to Glu-1012.

In terms of assembly, homotrimer. A central divalent metal stabilizes the VP2 trimer. Interacts with host ITGA4/ITGB1. As to quaternary structure, homodimer. Interacts (via C-terminus) with VP1 in the cytoplasm. Interacts with VP2. Post-translationally, specific enzymatic cleavages yield mature proteins. The capsid assembly seems to be regulated by polyprotein processing. The protease VP4 cleaves itself off the polyprotein, thus releasing pre-VP2 and VP3 within the infected cell. During capsid assembly, the C-terminus of pre-VP2 is further processed by VP4, giving rise to VP2, the external capsid protein and three small peptides that all stay closely associated with the capsid.

The protein resides in the virion. The protein localises to the host cytoplasm. In terms of biological role, capsid protein VP2 self assembles to form an icosahedral capsid with a T=13 symmetry, about 70 nm in diameter, and consisting of 260 VP2 trimers. The capsid encapsulates the genomic dsRNA. VP2 is also involved in attachment and entry into the host cell by interacting with host ITGA4/ITGB1. Its function is as follows. The precursor of VP2 plays an important role in capsid assembly. First, pre-VP2 and VP2 oligomers assemble to form a procapsid. Then, the pre-VP2 intermediates may be processed into VP2 proteins by proteolytic cleavage mediated by VP4 to obtain the mature virion. The final capsid is composed of pentamers and hexamers but VP2 has a natural tendency to assemble into all-pentameric structures. Therefore pre-VP2 may be required to allow formation of the hexameric structures. Protease VP4 is a serine protease that cleaves the polyprotein into its final products. Pre-VP2 is first partially cleaved, and may be completely processed by VP4 upon capsid maturation. Functionally, capsid protein VP3 plays a key role in virion assembly by providing a scaffold for the capsid made of VP2. May self-assemble to form a T=4-like icosahedral inner-capsid composed of at least 180 trimers. Plays a role in genomic RNA packaging by recruiting VP1 into the capsid and interacting with the dsRNA genome segments to form a ribonucleoprotein complex. Additionally, the interaction of the VP3 C-terminal tail with VP1 removes the inherent structural blockade of the polymerase active site. Thus, VP3 can also function as a transcriptional activator. In terms of biological role, structural peptide 1 is a small peptide derived from pre-VP2 C-terminus. It destabilizes and perforates cell membranes, suggesting a role during entry. Its function is as follows. Structural peptide 2 is a small peptide derived from pVP2 C-terminus. It is not essential for the virus viability, but viral growth is affected when missing. Structural peptide 3 is a small peptide derived from pVP2 C-terminus. It is not essential for the virus viability, but viral growth is affected when missing. Functionally, structural peptide 4 is a small peptide derived from pVP2 C-terminus. It is essential for the virus viability. The protein is Structural polyprotein of Gallus gallus (Chicken).